Here is a 286-residue protein sequence, read N- to C-terminus: ATP synthase gamma chain (286 aa).

It belongs to the ATPase gamma chain family. F-type ATPases have 2 components, CF(1) - the catalytic core - and CF(0) - the membrane proton channel. CF(1) has five subunits: alpha(3), beta(3), gamma(1), delta(1), epsilon(1). CF(0) has three main subunits: a, b and c.

It is found in the cell inner membrane. Its function is as follows. Produces ATP from ADP in the presence of a proton gradient across the membrane. The gamma chain is believed to be important in regulating ATPase activity and the flow of protons through the CF(0) complex. The protein is ATP synthase gamma chain of Shewanella sp. (strain ANA-3).